Here is a 259-residue protein sequence, read N- to C-terminus: DNA-directed RNA polymerase 30 kDa polypeptide (259 aa).

The TFIIS-type zinc finger occupies 155 to 195 (YNTPCPNCKSRNTTPMMIQTRAADEPPLVRHACRDCKQHFK). Zn(2+) is bound by residues Cys159, Cys162, Cys187, and Cys190. Residues 220-259 (EILPDNNPSPPESPEPASPIDDGLIRATFDRNDEPPEDDE) form a disordered region. Over residues 226-236 (NPSPPESPEPA) the composition is skewed to pro residues.

It belongs to the poxviridae DNA-directed RNA polymerase 30 kDa subunit family. As to quaternary structure, the DNA-dependent RNA polymerase (vRNAP) consists of eight subunits encoded by early viral genes and termed according to their apparent molecular masses Rpo147, Rpo132, Rpo35, Rpo30, Rpo22, Rpo19, Rpo18, and Rpo7. The same holoenzyme, with the addition of the transcription-specificity factor RAP94, is used for early gene expression.

It localises to the virion. Its subcellular location is the host cytoplasm. The enzyme catalyses RNA(n) + a ribonucleoside 5'-triphosphate = RNA(n+1) + diphosphate. In terms of biological role, part of the DNA-dependent RNA polymerase which catalyzes the transcription of viral DNA into RNA using the four ribonucleoside triphosphates as substrates. Responsible for the transcription of early, intermediate and late genes. DNA-dependent RNA polymerase associates with the early transcription factor (ETF), itself composed of OPG118 and OPG134, thereby allowing the early genes transcription. Late transcription, and probably also intermediate transcription, require newly synthesized RNA polymerase. This is DNA-directed RNA polymerase 30 kDa polypeptide (OPG066) from Monkeypox virus.